The primary structure comprises 497 residues: Cobyrinate a,c-diamide synthase (497 aa).

Residues 273–478 (RIGIALDEAF…AHLHGVAYRE (206 aa)) form the GATase cobBQ-type domain. C355 serves as the catalytic Nucleophile.

It belongs to the CobB/CbiA family. Requires Mg(2+) as cofactor.

The enzyme catalyses cob(II)yrinate + 2 L-glutamine + 2 ATP + 2 H2O = cob(II)yrinate a,c diamide + 2 L-glutamate + 2 ADP + 2 phosphate + 2 H(+). It carries out the reaction Ni-sirohydrochlorin + 2 L-glutamine + 2 ATP + 2 H2O = Ni-sirohydrochlorin a,c-diamide + 2 L-glutamate + 2 ADP + 2 phosphate + 2 H(+). It functions in the pathway cofactor biosynthesis; adenosylcobalamin biosynthesis; cob(II)yrinate a,c-diamide from sirohydrochlorin (anaerobic route): step 10/10. Its function is as follows. Catalyzes the ATP-dependent amidation of the two carboxylate groups at positions a and c of cobyrinate, using either L-glutamine or ammonia as the nitrogen source (Potential). Involved in the biosynthesis of the unique nickel-containing tetrapyrrole coenzyme F430, the prosthetic group of methyl-coenzyme M reductase (MCR), which plays a key role in methanogenesis and anaerobic methane oxidation. Catalyzes the ATP-dependent amidation of the two carboxylate groups at positions a and c of Ni-sirohydrochlorin, using L-glutamine or ammonia as the nitrogen source. The protein is Cobyrinate a,c-diamide synthase of Methanosarcina acetivorans (strain ATCC 35395 / DSM 2834 / JCM 12185 / C2A).